The sequence spans 805 residues: Mitochondrial intermediate peptidase (805 aa).

A mitochondrion-targeting transit peptide spans 1-25 (MIQPLVKASRPRLWVCSDCLLRRTL). Histidine 578 provides a ligand contact to Zn(2+). Glutamate 579 is a catalytic residue. Zn(2+)-binding residues include histidine 582 and histidine 585.

This sequence belongs to the peptidase M3 family. It depends on Zn(2+) as a cofactor.

The protein localises to the mitochondrion matrix. It carries out the reaction Release of an N-terminal octapeptide as second stage of processing of some proteins imported into the mitochondrion.. Functionally, cleaves proteins, imported into the mitochondrion, to their mature size. While most mitochondrial precursor proteins are processed to the mature form in one step by mitochondrial processing peptidase (MPP), the sequential cleavage by MIP of an octapeptide after initial processing by MPP is a required step for a subgroup of nuclear-encoded precursor proteins destined for the matrix or the inner membrane. The sequence is that of Mitochondrial intermediate peptidase (oct-1) from Neurospora crassa (strain ATCC 24698 / 74-OR23-1A / CBS 708.71 / DSM 1257 / FGSC 987).